A 432-amino-acid polypeptide reads, in one-letter code: Elongation factor 1-gamma (432 aa).

Residues 1-82 enclose the GST N-terminal domain; the sequence is LYTYPENWRA…YVSNEELRGS (82 aa). In terms of domain architecture, GST C-terminal spans 83-211; that stretch reads TPEAAAQVVQ…VKLCEKMAQF (129 aa). Residues Lys142 and Lys207 each carry the N6-acetyllysine modification. Over residues 216–249 the composition is skewed to basic and acidic residues; that stretch reads FAESQPKKDTPRKEKGSREEKQKPQAERKEEKKA. The tract at residues 216-258 is disordered; that stretch reads FAESQPKKDTPRKEKGSREEKQKPQAERKEEKKAAAPAPEEEL. Lys248 participates in a covalent cross-link: Glycyl lysine isopeptide (Lys-Gly) (interchain with G-Cter in SUMO1). The EF-1-gamma C-terminal domain occupies 271–432; it reads AKDPFAHLPK…KAFNQGKIFK (162 aa). A Glycyl lysine isopeptide (Lys-Gly) (interchain with G-Cter in SUMO2) cross-link involves residue Lys280. Lys396 bears the N6-acetyllysine mark. An N6-acetyllysine; alternate modification is found at Lys429. Lys429 bears the N6-malonyllysine; alternate mark.

EF-1 is composed of four subunits: alpha, beta, delta, and gamma.

Its function is as follows. Probably plays a role in anchoring the complex to other cellular components. In Sus scrofa (Pig), this protein is Elongation factor 1-gamma (EEF1G).